A 338-amino-acid polypeptide reads, in one-letter code: Probable dual-specificity RNA methyltransferase RlmN (338 aa).

The active-site Proton acceptor is the Glu-89. The 231-residue stretch at 95–325 (HNYGMSACVT…AILRKEQGHD (231 aa)) folds into the Radical SAM core domain. Cys-102 and Cys-330 form a disulfide bridge. Residues Cys-109, Cys-113, and Cys-116 each coordinate [4Fe-4S] cluster. S-adenosyl-L-methionine contacts are provided by residues 156–157 (GE), Ser-188, 211–213 (SLH), and Asn-287. Cys-330 (S-methylcysteine intermediate) is an active-site residue.

It belongs to the radical SAM superfamily. RlmN family. [4Fe-4S] cluster serves as cofactor.

It localises to the cytoplasm. The catalysed reaction is adenosine(2503) in 23S rRNA + 2 reduced [2Fe-2S]-[ferredoxin] + 2 S-adenosyl-L-methionine = 2-methyladenosine(2503) in 23S rRNA + 5'-deoxyadenosine + L-methionine + 2 oxidized [2Fe-2S]-[ferredoxin] + S-adenosyl-L-homocysteine. It carries out the reaction adenosine(37) in tRNA + 2 reduced [2Fe-2S]-[ferredoxin] + 2 S-adenosyl-L-methionine = 2-methyladenosine(37) in tRNA + 5'-deoxyadenosine + L-methionine + 2 oxidized [2Fe-2S]-[ferredoxin] + S-adenosyl-L-homocysteine. In terms of biological role, specifically methylates position 2 of adenine 2503 in 23S rRNA and position 2 of adenine 37 in tRNAs. This Acholeplasma laidlawii (strain PG-8A) protein is Probable dual-specificity RNA methyltransferase RlmN.